A 439-amino-acid chain; its full sequence is Putative porin QuiX (439 aa).

Residues 1–22 form the signal peptide; it reads MRHFFKLGLVSAAVLGSQMTLA.

The protein belongs to the OprB family.

The protein resides in the cell outer membrane. Functionally, could be involved in the transport of quinate or shikimate. The chain is Putative porin QuiX (quiX) from Acinetobacter baylyi (strain ATCC 33305 / BD413 / ADP1).